A 129-amino-acid chain; its full sequence is Large ribosomal subunit protein mL53 (129 aa).

Residues 1 to 50 constitute a mitochondrion transit peptide; the sequence is MREKLNLLAKLKSVVYKFDPLNPNTRSIRSFIPLTTCKRSRQLAPECSIS.

It belongs to the mitochondrion-specific ribosomal protein mL53 family.

The protein localises to the mitochondrion. The sequence is that of Large ribosomal subunit protein mL53 (mrpl53) from Dictyostelium discoideum (Social amoeba).